The primary structure comprises 229 residues: Tubulin-specific chaperone B (229 aa).

Residues 170–212 enclose the CAP-Gly domain; that stretch reads GATKFKEGVWVGVKYDEPVGKNDGSVAGVRYFDCDPKYGGFVR.

Belongs to the TBCB family. Supercomplex made of cofactors A to E. Cofactors A and D function by capturing and stabilizing tubulin in a quasi-native conformation. Cofactor E binds to the cofactor D-tubulin complex; interaction with cofactor C then causes the release of tubulin polypeptides that are committed to the native state.

The protein localises to the cytoplasm. It localises to the cytoskeleton. In terms of biological role, binds to alpha-tubulin folding intermediates after their interaction with cytosolic chaperonin in the pathway leading from newly synthesized tubulin to properly folded heterodimer. The sequence is that of Tubulin-specific chaperone B from Caenorhabditis elegans.